Consider the following 407-residue polypeptide: Phosphopentomutase (407 aa).

Mn(2+)-binding residues include aspartate 10, aspartate 306, histidine 311, aspartate 347, histidine 348, and histidine 359.

Belongs to the phosphopentomutase family. Requires Mn(2+) as cofactor.

Its subcellular location is the cytoplasm. It carries out the reaction 2-deoxy-alpha-D-ribose 1-phosphate = 2-deoxy-D-ribose 5-phosphate. It catalyses the reaction alpha-D-ribose 1-phosphate = D-ribose 5-phosphate. Its pathway is carbohydrate degradation; 2-deoxy-D-ribose 1-phosphate degradation; D-glyceraldehyde 3-phosphate and acetaldehyde from 2-deoxy-alpha-D-ribose 1-phosphate: step 1/2. Functionally, isomerase that catalyzes the conversion of deoxy-ribose 1-phosphate (dRib-1-P) and ribose 1-phosphate (Rib-1-P) to deoxy-ribose 5-phosphate (dRib-5-P) and ribose 5-phosphate (Rib-5-P), respectively. The polypeptide is Phosphopentomutase (Enterobacter sp. (strain 638)).